A 254-amino-acid polypeptide reads, in one-letter code: Alcohol dehydrogenase (254 aa).

Residue 10 to 33 coordinates NAD(+); it reads FVAGLGGIGLDTSRELVKRDLKNL. Serine 138 contacts substrate. The active-site Proton acceptor is tyrosine 151.

It belongs to the short-chain dehydrogenases/reductases (SDR) family. Homodimer.

The enzyme catalyses a primary alcohol + NAD(+) = an aldehyde + NADH + H(+). It catalyses the reaction a secondary alcohol + NAD(+) = a ketone + NADH + H(+). The chain is Alcohol dehydrogenase (Adh) from Drosophila guanche (Fruit fly).